A 108-amino-acid chain; its full sequence is UPF0102 protein Sden_0272 (108 aa).

Belongs to the UPF0102 family.

In Shewanella denitrificans (strain OS217 / ATCC BAA-1090 / DSM 15013), this protein is UPF0102 protein Sden_0272.